Consider the following 518-residue polypeptide: Crotonobetaine/carnitine--CoA ligase (518 aa).

It belongs to the ATP-dependent AMP-binding enzyme family.

The catalysed reaction is 4-(trimethylamino)butanoate + ATP + CoA = 4-(trimethylamino)butanoyl-CoA + AMP + diphosphate. It catalyses the reaction crotonobetaine + ATP + CoA = crotonobetainyl-CoA + AMP + diphosphate. It carries out the reaction (R)-carnitine + ATP + CoA = (R)-carnitinyl-CoA + AMP + diphosphate. Its pathway is amine and polyamine metabolism; carnitine metabolism. Catalyzes the transfer of CoA to carnitine, generating the initial carnitinyl-CoA needed for the CaiB reaction cycle. Also has activity toward crotonobetaine and gamma-butyrobetaine. The protein is Crotonobetaine/carnitine--CoA ligase of Proteus mirabilis (strain HI4320).